We begin with the raw amino-acid sequence, 479 residues long: Glycogen synthase (479 aa).

Lys15 contributes to the ADP-alpha-D-glucose binding site.

It belongs to the glycosyltransferase 1 family. Bacterial/plant glycogen synthase subfamily.

It catalyses the reaction [(1-&gt;4)-alpha-D-glucosyl](n) + ADP-alpha-D-glucose = [(1-&gt;4)-alpha-D-glucosyl](n+1) + ADP + H(+). The protein operates within glycan biosynthesis; glycogen biosynthesis. Its function is as follows. Synthesizes alpha-1,4-glucan chains using ADP-glucose. This chain is Glycogen synthase, found in Acidiphilium cryptum (strain JF-5).